Consider the following 1132-residue polypeptide: Major DNA-binding protein (1132 aa).

Positions 1103–1132 (VEELFPSPGVPSLTVGKKRKIASLLSDLDL) are required for nuclear localization.

The protein belongs to the herpesviridae major DNA-binding protein family. As to quaternary structure, homooligomers. Forms double-helical filaments necessary for the formation of replication compartments within the host nucleus. Interacts with the origin-binding protein. Interacts with the helicase primase complex; this interaction stimulates primer synthesis activity of the helicase-primase complex. Interacts with the DNA polymerase. Interacts with the alkaline exonuclease; this interaction increases its nuclease processivity.

The protein resides in the host nucleus. Functionally, plays several crucial roles in viral infection. Participates in the opening of the viral DNA origin to initiate replication by interacting with the origin-binding protein. May disrupt loops, hairpins and other secondary structures present on ssDNA to reduce and eliminate pausing of viral DNA polymerase at specific sites during elongation. Promotes viral DNA recombination by performing strand-transfer, characterized by the ability to transfer a DNA strand from a linear duplex to a complementary single-stranded DNA circle. Can also catalyze the renaturation of complementary single strands. Additionally, reorganizes the host cell nucleus, leading to the formation of prereplicative sites and replication compartments. This process is driven by the protein which can form double-helical filaments in the absence of DNA. The sequence is that of Major DNA-binding protein from Human herpesvirus 8 type P (isolate GK18) (HHV-8).